The chain runs to 858 residues: Heat shock protein 105 kDa (858 aa).

An N-acetylserine modification is found at S2. At K471 the chain carries N6-acetyllysine. Disordered regions lie at residues 500–584 (KVPT…PPEA) and 796–858 (CEPV…MDLD). Acidic residues predominate over residues 504-514 (EENEMSSEADM). Phosphoserine occurs at positions 509 and 510. Residues 532–554 (QQDNSEAGTQPQVQTDAQQTSQS) are compositionally biased toward polar residues. A Phosphoserine modification is found at S557. At T561 the chain carries Phosphothreonine. Basic and acidic residues-rich tracts occupy residues 563–584 (EENK…PPEA) and 805–814 (PKIESPKLER). S809 carries the post-translational modification Phosphoserine. Phosphothreonine is present on T815. The span at 821–832 (IDKKEEDLEDKN) shows a compositional bias: basic and acidic residues. The segment covering 849–858 (EKNSVNMDLD) has biased composition (polar residues).

The protein belongs to the heat shock protein 70 family. As to quaternary structure, interacts with HSPA8/HSC70. Interacts with HSPA1A (via NBD) and HSPA1B (via NBD). In terms of processing, phosphorylation on Ser-509 may be important for regulation of the HSPA8/HSC70 chaperone activity.

The protein localises to the cytoplasm. Its function is as follows. Acts as a nucleotide-exchange factor (NEF) for chaperone proteins HSPA1A and HSPA1B, promoting the release of ADP from HSPA1A/B thereby triggering substrate release. Prevents the aggregation of denatured proteins in cells under severe stress, on which the ATP levels decrease markedly. Inhibits HSPA8/HSC70 ATPase and chaperone activities. The polypeptide is Heat shock protein 105 kDa (HSPH1) (Pongo abelii (Sumatran orangutan)).